Reading from the N-terminus, the 206-residue chain is Protein GrpE (206 aa).

Positions 1–36 (MTDSNGPKDNNQDQAQAAADPVVSKPYIMPDDPEDG) are disordered.

This sequence belongs to the GrpE family. As to quaternary structure, homodimer.

It localises to the cytoplasm. Functionally, participates actively in the response to hyperosmotic and heat shock by preventing the aggregation of stress-denatured proteins, in association with DnaK and GrpE. It is the nucleotide exchange factor for DnaK and may function as a thermosensor. Unfolded proteins bind initially to DnaJ; upon interaction with the DnaJ-bound protein, DnaK hydrolyzes its bound ATP, resulting in the formation of a stable complex. GrpE releases ADP from DnaK; ATP binding to DnaK triggers the release of the substrate protein, thus completing the reaction cycle. Several rounds of ATP-dependent interactions between DnaJ, DnaK and GrpE are required for fully efficient folding. The chain is Protein GrpE from Rhodopseudomonas palustris (strain HaA2).